The primary structure comprises 247 residues: tRNA pseudouridine synthase A (247 aa).

The Nucleophile role is filled by D57. Y115 provides a ligand contact to substrate.

It belongs to the tRNA pseudouridine synthase TruA family. Homodimer.

The enzyme catalyses uridine(38/39/40) in tRNA = pseudouridine(38/39/40) in tRNA. Its function is as follows. Formation of pseudouridine at positions 38, 39 and 40 in the anticodon stem and loop of transfer RNAs. The polypeptide is tRNA pseudouridine synthase A (Chlorobaculum tepidum (strain ATCC 49652 / DSM 12025 / NBRC 103806 / TLS) (Chlorobium tepidum)).